Consider the following 556-residue polypeptide: Beta-hexosaminidase subunit beta (556 aa).

Residues 1-42 (MELCGLGLPRPPMLLALLLATLLAAMLALLTQVALVVQVAEA) form the signal peptide. A propeptide spanning residues 43–121 (ARAPSVSAKP…HHEPAEFQAK (79 aa)) is cleaved from the precursor. Asn84 is a glycosylation site (N-linked (GlcNAc...) asparagine). A disulfide bridge connects residues Cys91 and Cys137. Residues Asn142, Asn190, and Asn327 are each glycosylated (N-linked (GlcNAc...) asparagine). 2 disulfides stabilise this stretch: Cys309-Cys360 and Cys534-Cys551. The active-site Proton donor is Glu355.

It belongs to the glycosyl hydrolase 20 family. In terms of assembly, there are 3 forms of beta-hexosaminidase: hexosaminidase A is a heterodimer composed of one subunit alpha and one subunit beta (chain A and B); hexosaminidase B is a homodimer of two beta subunits (two chains A and B); hexosaminidase S is a homodimer of two alpha subunits. The composition of the dimer (isozyme A versus isozyme S) has a significant effect on the substrate specificity of the alpha subunit active site. In terms of processing, N-linked glycans at Asn-142 and Asn-190 consist of Man(3)-GlcNAc(2) and Man(5 to 7)-GlcNAc(2), respectively. Post-translationally, the beta-A and beta-B chains are produced by proteolytic processing of the precursor beta chain.

It is found in the lysosome. The protein resides in the cytoplasmic vesicle. Its subcellular location is the secretory vesicle. It localises to the cortical granule. It carries out the reaction Hydrolysis of terminal non-reducing N-acetyl-D-hexosamine residues in N-acetyl-beta-D-hexosaminides.. The catalysed reaction is N-acetyl-beta-D-galactosaminyl-(1-&gt;4)-beta-D-3-sulfogalactosyl-(1-&gt;4)-beta-D-glucosyl-(1&lt;-&gt;1')-ceramide + H2O = a beta-D-3-sulfogalactosyl-(1-&gt;4)-beta-D-glucosyl-(1&lt;-&gt;1')-ceramide + N-acetyl-beta-D-galactosamine. It catalyses the reaction a ganglioside GM2 (d18:1(4E)) + H2O = a ganglioside GM3 (d18:1(4E)) + N-acetyl-beta-D-galactosamine. The enzyme catalyses a ganglioside GM2 + H2O = a ganglioside GM3 + N-acetyl-beta-D-galactosamine. It carries out the reaction beta-D-GalNAc-(1-&gt;4)-alpha-L-IdoA-(1-&gt;3)-beta-D-GalNAc-4-sulfate-(1-&gt;4)-alpha-L-IdoA-(1-&gt;3)-D-GalNAc-4-sulfate + H2O = alpha-L-IdoA-(1-&gt;3)-beta-D-GalNAc-4-sulfate-(1-&gt;4)-alpha-L-IdoA-(1-&gt;3)-D-GalNAc-4-sulfate + N-acetyl-D-galactosamine. The catalysed reaction is N-acetyl-beta-D-6-sulfogalactosaminyl-(1-&gt;4)-alpha-L-iduronyl-(1-&gt;3)-N-acetyl-D-6-sulfogalactosamine + H2O = alpha-L-iduronyl-(1-&gt;3)-N-acetyl-D-6-sulfogalactosamine + N-acetyl-D-6-sulfogalactosamine. With respect to regulation, addition of GM2A stimulates the hydrolysis of sulfated glycosphingolipid SM2 and the ganglioside GM2. Its function is as follows. Hydrolyzes the non-reducing end N-acetyl-D-hexosamine and/or sulfated N-acetyl-D-hexosamine of glycoconjugates, such as the oligosaccharide moieties from proteins and neutral glycolipids, or from certain mucopolysaccharides. The isozyme B does not hydrolyze each of these substrates, however hydrolyzes efficiently neutral oligosaccharide. Only the isozyme A is responsible for the degradation of GM2 gangliosides in the presence of GM2A. During fertilization is responsible, at least in part, for the zona block to polyspermy. Present in the cortical granules of non-activated oocytes, is exocytosed during the cortical reaction in response to oocyte activation and inactivates the sperm galactosyltransferase-binding site, accounting for the block in sperm binding to the zona pellucida. The chain is Beta-hexosaminidase subunit beta from Homo sapiens (Human).